Reading from the N-terminus, the 531-residue chain is Peptide chain release factor 3 (531 aa).

One can recognise a tr-type G domain in the interval Arg-10–Lys-278. GTP-binding positions include Ser-19–Thr-26, Asp-87–His-91, and Asn-141–Asp-144.

Belongs to the TRAFAC class translation factor GTPase superfamily. Classic translation factor GTPase family. PrfC subfamily.

The protein localises to the cytoplasm. In terms of biological role, increases the formation of ribosomal termination complexes and stimulates activities of RF-1 and RF-2. It binds guanine nucleotides and has strong preference for UGA stop codons. It may interact directly with the ribosome. The stimulation of RF-1 and RF-2 is significantly reduced by GTP and GDP, but not by GMP. This is Peptide chain release factor 3 from Neisseria gonorrhoeae (strain NCCP11945).